The sequence spans 316 residues: MDRIIGLPDEVLVKILSFVPTKVAVSTSILSKRWEFLWMWLTKLKFGSKRYSESEFKRLQCFLDRNLPLHRAPVIESFRLVLSDSHFKPEDIRMWVVVAVSRYIRELKIYSSHYGEKQNILPSSLYTCKSLVILKLDGGVLLDVPRMVCLPSLKTLELKGVRYFKQGSLQRLLCNCPVLEDLFVLLLRCDDIGMFIVIVPSLQRLSLYLSPRCNLEGFVIVLDTPLEYFKLVDRNYDRHPYMIENMPKLTSAYVEVISADLKSLVESITSVKYLTIFSENYDDFVFPWNQPSTVPKCFCPVYKSSPVYKSSPGQNT.

The 47-residue stretch at 1–47 (MDRIIGLPDEVLVKILSFVPTKVAVSTSILSKRWEFLWMWLTKLKFG) folds into the F-box domain.

The sequence is that of F-box protein At4g09920 from Arabidopsis thaliana (Mouse-ear cress).